Here is a 320-residue protein sequence, read N- to C-terminus: Lipoyl synthase (320 aa).

Residues 1–29 (MVTVVDRVTNRRLRHPEKAHRPDTSVQKK) form a disordered region. Residues 19–29 (AHRPDTSVQKK) are compositionally biased toward basic and acidic residues. [4Fe-4S] cluster contacts are provided by Cys59, Cys64, Cys70, Cys85, Cys89, Cys92, and Ser298. The Radical SAM core domain maps to 71 to 287 (WSQRHASFMI…AKIGKVKGFL (217 aa)).

Belongs to the radical SAM superfamily. Lipoyl synthase family. [4Fe-4S] cluster is required as a cofactor.

It is found in the cytoplasm. It carries out the reaction [[Fe-S] cluster scaffold protein carrying a second [4Fe-4S](2+) cluster] + N(6)-octanoyl-L-lysyl-[protein] + 2 oxidized [2Fe-2S]-[ferredoxin] + 2 S-adenosyl-L-methionine + 4 H(+) = [[Fe-S] cluster scaffold protein] + N(6)-[(R)-dihydrolipoyl]-L-lysyl-[protein] + 4 Fe(3+) + 2 hydrogen sulfide + 2 5'-deoxyadenosine + 2 L-methionine + 2 reduced [2Fe-2S]-[ferredoxin]. Its pathway is protein modification; protein lipoylation via endogenous pathway; protein N(6)-(lipoyl)lysine from octanoyl-[acyl-carrier-protein]: step 2/2. In terms of biological role, catalyzes the radical-mediated insertion of two sulfur atoms into the C-6 and C-8 positions of the octanoyl moiety bound to the lipoyl domains of lipoate-dependent enzymes, thereby converting the octanoylated domains into lipoylated derivatives. In Bartonella tribocorum (strain CIP 105476 / IBS 506), this protein is Lipoyl synthase.